Here is a 525-residue protein sequence, read N- to C-terminus: Probable protein kinase UbiB (525 aa).

The Protein kinase domain maps to Asp118–Gly500. Residues Val124–Val132 and Lys150 contribute to the ATP site. Asp285 serves as the catalytic Proton acceptor. A helical membrane pass occupies residues Leu501 to Leu521.

This sequence belongs to the ABC1 family. UbiB subfamily.

The protein resides in the cell inner membrane. Its pathway is cofactor biosynthesis; ubiquinone biosynthesis [regulation]. Its function is as follows. Is probably a protein kinase regulator of UbiI activity which is involved in aerobic coenzyme Q (ubiquinone) biosynthesis. This is Probable protein kinase UbiB from Paraburkholderia phytofirmans (strain DSM 17436 / LMG 22146 / PsJN) (Burkholderia phytofirmans).